The primary structure comprises 102 residues: MAGQKIRIRLKAYDHEVVDSSARKIVETVTRTGAQVAGPVPLPTEINRFCVIRSPHKYKDSREHFEMRTHKRLIDIIDPTPKTVDSLMRLDLPAGVDIEIKL.

Belongs to the universal ribosomal protein uS10 family. In terms of assembly, part of the 30S ribosomal subunit.

Involved in the binding of tRNA to the ribosomes. In Salinispora tropica (strain ATCC BAA-916 / DSM 44818 / JCM 13857 / NBRC 105044 / CNB-440), this protein is Small ribosomal subunit protein uS10.